Consider the following 293-residue polypeptide: N-acetylneuraminate lyase (293 aa).

2 residues coordinate aceneuramate: Ser48 and Ser49. The active-site Proton donor is the Tyr137. Lys165 (schiff-base intermediate with substrate) is an active-site residue. Positions 167, 189, 191, 192, and 208 each coordinate aceneuramate.

The protein belongs to the DapA family. NanA subfamily. Homotetramer.

Its subcellular location is the cytoplasm. It carries out the reaction aceneuramate = aldehydo-N-acetyl-D-mannosamine + pyruvate. It participates in amino-sugar metabolism; N-acetylneuraminate degradation; D-fructose 6-phosphate from N-acetylneuraminate: step 1/5. In terms of biological role, catalyzes the reversible aldol cleavage of N-acetylneuraminic acid (sialic acid; Neu5Ac) to form pyruvate and N-acetylmannosamine (ManNAc) via a Schiff base intermediate. The chain is N-acetylneuraminate lyase from Staphylococcus carnosus (strain TM300).